The sequence spans 367 residues: Sigma54-dependent transcriptional regulator SfnR (367 aa).

The Sigma-54 factor interaction domain maps to 21-250 (QVFEDPKSQA…LENVIHHTLL (230 aa)). Residues 49–56 (GETGTGKE) and 112–121 (ADGGTLFLDE) each bind ATP.

Its function is as follows. Involved in the dimethyl sulfide degradation pathway. Activates the expression of sfnG and sfnF. The chain is Sigma54-dependent transcriptional regulator SfnR from Pseudomonas fluorescens (strain Pf0-1).